Reading from the N-terminus, the 302-residue chain is Fluoroacetate dehalogenase (302 aa).

In terms of domain architecture, AB hydrolase-1 spans 32–270; it reads PPLLLLHGFP…LDVWRKWASD (239 aa). D110 (nucleophile) is an active-site residue. Positions 111, 114, 155, 156, and 219 each coordinate fluoroacetate. Residue H280 is the Proton acceptor of the active site.

This sequence belongs to the AB hydrolase superfamily. Epoxide hydrolase family. In terms of assembly, homodimer.

It carries out the reaction a haloacetate + H2O = a halide anion + glycolate + H(+). It catalyses the reaction fluoroacetate + H2O = fluoride + glycolate + H(+). The enzyme catalyses chloroacetate + H2O = glycolate + chloride + H(+). In terms of biological role, catalyzes the hydrolytic defluorination of fluoroacetate to produce glycolate. Has lower activity towards chloroacetate and bromoacetate. The chain is Fluoroacetate dehalogenase from Rhodopseudomonas palustris (strain ATCC BAA-98 / CGA009).